The primary structure comprises 830 residues: Leucine--tRNA ligase (830 aa).

The short motif at 42-52 (PYPSGNLHMGH) is the 'HIGH' region element. Positions 585–589 (KMSKS) match the 'KMSKS' region motif. Lys588 is an ATP binding site.

Belongs to the class-I aminoacyl-tRNA synthetase family.

Its subcellular location is the cytoplasm. The enzyme catalyses tRNA(Leu) + L-leucine + ATP = L-leucyl-tRNA(Leu) + AMP + diphosphate. The polypeptide is Leucine--tRNA ligase (Halothermothrix orenii (strain H 168 / OCM 544 / DSM 9562)).